The sequence spans 352 residues: Holliday junction branch migration complex subunit RuvB (352 aa).

Residues 1–42 are disordered; that stretch reads MAIVSSSAGRADSQPPAAKSRVVDASPLPEEASPAREDGLRP. A large ATPase domain (RuvB-L) region spans residues 13-201; that stretch reads SQPPAAKSRV…FGLIQRLEFY (189 aa). Residues 33-42 show a composition bias toward basic and acidic residues; the sequence is SPAREDGLRP. Residues L40, R41, G82, K85, T86, T87, R191, Y201, and R238 each coordinate ATP. Residue T86 participates in Mg(2+) binding. Positions 202–273 are small ATPAse domain (RuvB-S); it reads GLEDLQAIVE…LVDEALTLHR (72 aa). Residues 276–352 form a head domain (RuvB-H) region; sequence ARGLDASDRR…RRHLGWPELP (77 aa). DNA is bound by residues R331 and R336.

Belongs to the RuvB family. Homohexamer. Forms an RuvA(8)-RuvB(12)-Holliday junction (HJ) complex. HJ DNA is sandwiched between 2 RuvA tetramers; dsDNA enters through RuvA and exits via RuvB. An RuvB hexamer assembles on each DNA strand where it exits the tetramer. Each RuvB hexamer is contacted by two RuvA subunits (via domain III) on 2 adjacent RuvB subunits; this complex drives branch migration. In the full resolvosome a probable DNA-RuvA(4)-RuvB(12)-RuvC(2) complex forms which resolves the HJ.

The protein resides in the cytoplasm. The catalysed reaction is ATP + H2O = ADP + phosphate + H(+). In terms of biological role, the RuvA-RuvB-RuvC complex processes Holliday junction (HJ) DNA during genetic recombination and DNA repair, while the RuvA-RuvB complex plays an important role in the rescue of blocked DNA replication forks via replication fork reversal (RFR). RuvA specifically binds to HJ cruciform DNA, conferring on it an open structure. The RuvB hexamer acts as an ATP-dependent pump, pulling dsDNA into and through the RuvAB complex. RuvB forms 2 homohexamers on either side of HJ DNA bound by 1 or 2 RuvA tetramers; 4 subunits per hexamer contact DNA at a time. Coordinated motions by a converter formed by DNA-disengaged RuvB subunits stimulates ATP hydrolysis and nucleotide exchange. Immobilization of the converter enables RuvB to convert the ATP-contained energy into a lever motion, pulling 2 nucleotides of DNA out of the RuvA tetramer per ATP hydrolyzed, thus driving DNA branch migration. The RuvB motors rotate together with the DNA substrate, which together with the progressing nucleotide cycle form the mechanistic basis for DNA recombination by continuous HJ branch migration. Branch migration allows RuvC to scan DNA until it finds its consensus sequence, where it cleaves and resolves cruciform DNA. The chain is Holliday junction branch migration complex subunit RuvB from Prochlorococcus marinus (strain MIT 9313).